We begin with the raw amino-acid sequence, 664 residues long: Acetylcholinesterase (664 aa).

Positions 1–29 (MFVNQRTRRPYMSVFVLVLGAAVICPAYG) are cleaved as a signal peptide. Residues Cys95 and Cys122 are joined by a disulfide bond. The N-linked (GlcNAc...) asparagine glycan is linked to Asn117. Ser261 serves as the catalytic Acyl-ester intermediate. The cysteines at positions 315 and 330 are disulfide-linked. N-linked (GlcNAc...) asparagine glycosylation occurs at Asn316. Active-site charge relay system residues include Glu390 and His504. Cysteines 466 and 588 form a disulfide. Residue Asn517 is glycosylated (N-linked (GlcNAc...) asparagine). A lipid anchor (GPI-anchor amidated asparagine) is attached at Asn647. Residues 648–664 (KTPPHPQVILETRAFMH) constitute a propeptide, removed in mature form.

The protein belongs to the type-B carboxylesterase/lipase family. Homodimer; disulfide-linked.

The protein localises to the synapse. It is found in the cell membrane. The enzyme catalyses acetylcholine + H2O = choline + acetate + H(+). Its function is as follows. Rapidly hydrolyzes choline released into the synapse. It can hydrolyze butyrylthiocholine. The chain is Acetylcholinesterase from Anopheles stephensi (Indo-Pakistan malaria mosquito).